Consider the following 858-residue polypeptide: NEDD4-binding protein 1 (858 aa).

The disordered stretch occupies residues 17–37; it reads TCTEPPGGRQSPTASRAQPDS. Polar residues predominate over residues 26–37; sequence QSPTASRAQPDS. Residues 96 to 180 form the KH-like domain; sequence KEDVYKAKEY…VQQFVALFQE (85 aa). Disordered stretches follow at residues 262–321 and 388–424; these read EDKT…TWTV and QKTQSTQGAQRTSRTPDPSPCANASSTSTSNRLKEKE. A compositionally biased stretch (basic and acidic residues) spans 285-316; that stretch reads RSSESEQRDTKRQYSLERREEEQCEEREREPT. Residues 389 to 418 show a composition bias toward polar residues; sequence KTQSTQGAQRTSRTPDPSPCANASSTSTSN. Residues 598–750 form the RNase NYN domain; it reads LRHIIIDGSN…LGKHGPHLDE (153 aa). Positions 774 to 784 are enriched in polar residues; the sequence is SVYSQAAQSTA. A disordered region spans residues 774–823; sequence SVYSQAAQSTAHPSSPSHWPHSGPPDWHLPRPSPSPPPQRSPSETTELKR. Over residues 785–799 the composition is skewed to low complexity; that stretch reads HPSSPSHWPHSGPPD. Positions 804–813 are enriched in pro residues; that stretch reads RPSPSPPPQR. The coCUN stretch occupies residues 813 to 858; it reads RSPSETTELKRKLYDIFPDQKQRIDRILSDNPYMRDLNALSGLLLG.

This sequence belongs to the N4BP1 family.

It localises to the nucleus. It is found in the nucleolus. The protein localises to the PML body. In terms of biological role, potent suppressor of cytokine production that acts as a regulator of innate immune signaling and inflammation. Acts as a key negative regulator of select cytokine and chemokine responses elicited by TRIF-independent Toll-like receptors (TLRs), thereby limiting inflammatory cytokine responses to minor insults. Has ribonuclease activity. This is NEDD4-binding protein 1 from Danio rerio (Zebrafish).